We begin with the raw amino-acid sequence, 281 residues long: Undecaprenyl-diphosphatase 1 (281 aa).

6 helical membrane passes run 95–115 (WMVI…KDLI), 119–139 (FRNL…FILA), 152–172 (LTMK…IPGV), 195–215 (FSFL…LPDA), 227–247 (LQLL…IAWL), and 256–276 (FAWF…LLGT).

The protein belongs to the UppP family.

The protein resides in the cell membrane. The enzyme catalyses di-trans,octa-cis-undecaprenyl diphosphate + H2O = di-trans,octa-cis-undecaprenyl phosphate + phosphate + H(+). Functionally, catalyzes the dephosphorylation of undecaprenyl diphosphate (UPP). Confers resistance to bacitracin. This Corynebacterium jeikeium (strain K411) protein is Undecaprenyl-diphosphatase 1.